Here is a 445-residue protein sequence, read N- to C-terminus: UNC93-like protein MFSD11 (445 aa).

The helical transmembrane segment at 8–28 threads the bilayer; that stretch reads LLNIVILGVGFMFMFTAFQTS. N40 is a glycosylation site (N-linked (GlcNAc...) asparagine). 4 consecutive transmembrane segments (helical) span residues 52 to 72, 74 to 94, 98 to 118, and 138 to 158; these read LAII…VIAV, GCQM…AMFI, TWSF…LWTA, and IFWA…YLAW. A glycan (N-linked (GlcNAc...) asparagine) is linked at N163. Transmembrane regions (helical) follow at residues 170 to 190, 239 to 259, 277 to 297, 309 to 329, 343 to 363, 385 to 405, and 415 to 435; these read RTVF…FFLI, MLLL…YSGV, LIGL…GLFG, PVVI…YLYM, LSAF…LLGL, APAF…AFFY, and LLIL…VEWG.

Belongs to the unc-93 family.

It localises to the membrane. The polypeptide is UNC93-like protein MFSD11 (mfsd11) (Xenopus laevis (African clawed frog)).